The following is a 293-amino-acid chain: 4-hydroxy-tetrahydrodipicolinate synthase (293 aa).

Thr47 contacts pyruvate. Tyr136 serves as the catalytic Proton donor/acceptor. The active-site Schiff-base intermediate with substrate is Lys164. Ile206 provides a ligand contact to pyruvate.

Belongs to the DapA family. In terms of assembly, homotetramer; dimer of dimers.

Its subcellular location is the cytoplasm. It carries out the reaction L-aspartate 4-semialdehyde + pyruvate = (2S,4S)-4-hydroxy-2,3,4,5-tetrahydrodipicolinate + H2O + H(+). Its pathway is amino-acid biosynthesis; L-lysine biosynthesis via DAP pathway; (S)-tetrahydrodipicolinate from L-aspartate: step 3/4. Catalyzes the condensation of (S)-aspartate-beta-semialdehyde [(S)-ASA] and pyruvate to 4-hydroxy-tetrahydrodipicolinate (HTPA). The sequence is that of 4-hydroxy-tetrahydrodipicolinate synthase from Listeria monocytogenes serotype 4b (strain CLIP80459).